The chain runs to 237 residues: Ribosomal RNA small subunit methyltransferase G (237 aa).

S-adenosyl-L-methionine-binding positions include glycine 78, phenylalanine 83, 129–130 (AE), and arginine 148.

Belongs to the methyltransferase superfamily. RNA methyltransferase RsmG family.

Its subcellular location is the cytoplasm. Specifically methylates the N7 position of a guanine in 16S rRNA. The protein is Ribosomal RNA small subunit methyltransferase G of Streptococcus pyogenes serotype M1.